The following is a 178-amino-acid chain: Translation initiation factor IF-3 (178 aa).

Belongs to the IF-3 family. In terms of assembly, monomer.

The protein localises to the cytoplasm. In terms of biological role, IF-3 binds to the 30S ribosomal subunit and shifts the equilibrium between 70S ribosomes and their 50S and 30S subunits in favor of the free subunits, thus enhancing the availability of 30S subunits on which protein synthesis initiation begins. The protein is Translation initiation factor IF-3 of Ureaplasma parvum serovar 3 (strain ATCC 700970).